The chain runs to 224 residues: UPF0758 protein AHA_0160 (224 aa).

The 123-residue stretch at 102 to 224 folds into the MPN domain; that stretch reads PLTSPQLTRD…TVSFAERGWL (123 aa). His173, His175, and Asp186 together coordinate Zn(2+). A JAMM motif motif is present at residues 173 to 186; that stretch reads HNHPSGVAEPSRAD.

Belongs to the UPF0758 family.

This Aeromonas hydrophila subsp. hydrophila (strain ATCC 7966 / DSM 30187 / BCRC 13018 / CCUG 14551 / JCM 1027 / KCTC 2358 / NCIMB 9240 / NCTC 8049) protein is UPF0758 protein AHA_0160.